Consider the following 357-residue polypeptide: Isopenicillin-N N-acyltransferase (357 aa).

Positions 121 and 310 each coordinate 6-aminopenicillanate.

This sequence belongs to the peptidase C45 family. As to quaternary structure, the active form of the enzyme results from processing of the 40-kDa monomeric precursor to a heterodimer containing subunits of 11 and 29 kDa. Post-translationally, the pre-AAT protein is synthesized as 40 kDa precursor which is then self-processed into an 11 kDa (protein A) and a 29 kDa (protein B). The B protein carries AAT activity.

Its subcellular location is the peroxisome matrix. The catalysed reaction is isopenicillin N + phenylacetyl-CoA + H2O = penicillin G + L-2-aminoadipate + CoA + H(+). It participates in antibiotic biosynthesis; penicillin G biosynthesis; penicillin G from L-alpha-aminoadipate and L-cysteine and L-valine: step 3/3. Functionally, isopenicillin-N N-acyltransferase; part of the gene cluster that mediates the biosynthesis of penicillin, the world's most important antibiotic. AatA catalyzes the exchange of the alpha-aminoadipyl side chain of isopenicillin N for phenylacetic acid to yield penicillin. This step occurs in the peroxisomal matrix and the penM and paaT transporters are involved in the isopenicillin N and phenylacetic acid import into the peroxisome, respectively. The penicillin biosynthesis occurs via 3 enzymatic steps, the first corresponding to the production of the tripeptide N-[(5S)-5-amino-5-carboxypentanoyl]-L-cysteinyl-D-valine (LLD-ACV or ACV) by the NRPS acvA. The tripeptide ACV is then cyclized to isopenicillin N (IPN) by the isopenicillin N synthase ipnA that forms the beta-lactam nucleus. Finally, the alpha-aminoadipyl side chain is exchanged for phenylacetic acid by the isopenicillin N acyltransferase aatA to yield penicillin in the peroxisomal matrix. The sequence is that of Isopenicillin-N N-acyltransferase from Penicillium chrysogenum (Penicillium notatum).